Here is a 775-residue protein sequence, read N- to C-terminus: 1,4-alpha-glucan branching enzyme GlgB (775 aa).

Catalysis depends on aspartate 431, which acts as the Nucleophile. The Proton donor role is filled by glutamate 484.

The protein belongs to the glycosyl hydrolase 13 family. GlgB subfamily. As to quaternary structure, monomer.

The catalysed reaction is Transfers a segment of a (1-&gt;4)-alpha-D-glucan chain to a primary hydroxy group in a similar glucan chain.. The protein operates within glycan biosynthesis; glycogen biosynthesis. Catalyzes the formation of the alpha-1,6-glucosidic linkages in glycogen by scission of a 1,4-alpha-linked oligosaccharide from growing alpha-1,4-glucan chains and the subsequent attachment of the oligosaccharide to the alpha-1,6 position. This chain is 1,4-alpha-glucan branching enzyme GlgB, found in Parasynechococcus marenigrum (strain WH8102).